The chain runs to 63 residues: Large ribosomal subunit protein bL28 (63 aa).

The protein belongs to the bacterial ribosomal protein bL28 family.

This chain is Large ribosomal subunit protein bL28, found in Pelobacter propionicus (strain DSM 2379 / NBRC 103807 / OttBd1).